Consider the following 212-residue polypeptide: phospholipase A2 inhibitor and Ly6/PLAUR domain-containing protein (212 aa).

The signal sequence occupies residues 1–24 (MILFRRHRTFLLAFTLLCTLLGLG). The UPAR/Ly6 domain maps to 27-117 (LTCEVCKGSG…NSGSVPPPLN (91 aa)). Intrachain disulfides connect C29–C53, C32–C39, C46–C74, C80–C101, C102–C107, C126–C152, and C145–C173.

Belongs to the CNF-like-inhibitor family.

It localises to the secreted. The chain is phospholipase A2 inhibitor and Ly6/PLAUR domain-containing protein (Pinlyp) from Mus musculus (Mouse).